The chain runs to 398 residues: Succinyl-diaminopimelate desuccinylase (398 aa).

His-73 is a Zn(2+) binding site. Asp-75 is a catalytic residue. Residue Asp-106 coordinates Zn(2+). Glu-140 (proton acceptor) is an active-site residue. Residues Glu-141, Glu-169, and His-366 each contribute to the Zn(2+) site.

This sequence belongs to the peptidase M20A family. DapE subfamily. Homodimer. Requires Zn(2+) as cofactor. The cofactor is Co(2+).

It catalyses the reaction N-succinyl-(2S,6S)-2,6-diaminopimelate + H2O = (2S,6S)-2,6-diaminopimelate + succinate. It participates in amino-acid biosynthesis; L-lysine biosynthesis via DAP pathway; LL-2,6-diaminopimelate from (S)-tetrahydrodipicolinate (succinylase route): step 3/3. Functionally, catalyzes the hydrolysis of N-succinyl-L,L-diaminopimelic acid (SDAP), forming succinate and LL-2,6-diaminopimelate (DAP), an intermediate involved in the bacterial biosynthesis of lysine and meso-diaminopimelic acid, an essential component of bacterial cell walls. The sequence is that of Succinyl-diaminopimelate desuccinylase from Agrobacterium fabrum (strain C58 / ATCC 33970) (Agrobacterium tumefaciens (strain C58)).